The sequence spans 587 residues: 5-aminolevulinate synthase, erythroid-specific, mitochondrial (587 aa).

A mitochondrion-targeting transit peptide spans 1–49 (MVTAAMLLQCCPVPARGPTSLLGKVVKTHQFLFGIGRCPILATQGPNCS). R163 serves as a coordination point for succinyl-CoA. Pyridoxal 5'-phosphate-binding residues include C258 and F259. Succinyl-CoA-binding residues include S280 and K299. Residues S332, H360, and T388 each contribute to the pyridoxal 5'-phosphate site. The active site involves K391. The residue at position 391 (K391) is an N6-(pyridoxal phosphate)lysine. Pyridoxal 5'-phosphate contacts are provided by T420 and T421. Succinyl-CoA is bound at residue T508.

This sequence belongs to the class-II pyridoxal-phosphate-dependent aminotransferase family. Homodimer. Interacts with SUCLA2. Pyridoxal 5'-phosphate serves as cofactor.

It is found in the mitochondrion inner membrane. It catalyses the reaction succinyl-CoA + glycine + H(+) = 5-aminolevulinate + CO2 + CoA. It functions in the pathway porphyrin-containing compound metabolism; protoporphyrin-IX biosynthesis; 5-aminolevulinate from glycine: step 1/1. In terms of biological role, catalyzes the pyridoxal 5'-phosphate (PLP)-dependent condensation of succinyl-CoA and glycine to form aminolevulinic acid (ALA), with CoA and CO2 as by-products. Contributes significantly to heme formation during erythropoiesis. This Pongo abelii (Sumatran orangutan) protein is 5-aminolevulinate synthase, erythroid-specific, mitochondrial (ALAS2).